Reading from the N-terminus, the 37-residue chain is Rugosin-C (37 aa).

A disulfide bond links cysteine 31 and cysteine 37.

This sequence belongs to the frog skin active peptide (FSAP) family. Brevinin subfamily. Expressed by the skin glands.

The protein resides in the secreted. In terms of biological role, has antibacterial activity against Gram-positive bacteria. This chain is Rugosin-C, found in Glandirana rugosa (Japanese wrinkled frog).